A 340-amino-acid chain; its full sequence is Anthranilate phosphoribosyltransferase (340 aa).

Residues Gly-83, 86-87, Thr-91, 93-96, 111-119, and Ser-123 contribute to the 5-phospho-alpha-D-ribose 1-diphosphate site; these read GD, NVST, and KHGNRSVSS. Residue Gly-83 participates in anthranilate binding. Ser-95 serves as a coordination point for Mg(2+). Asn-114 provides a ligand contact to anthranilate. An anthranilate-binding site is contributed by Arg-169. Positions 228 and 229 each coordinate Mg(2+).

The protein belongs to the anthranilate phosphoribosyltransferase family. Homodimer. Requires Mg(2+) as cofactor.

It carries out the reaction N-(5-phospho-beta-D-ribosyl)anthranilate + diphosphate = 5-phospho-alpha-D-ribose 1-diphosphate + anthranilate. Its pathway is amino-acid biosynthesis; L-tryptophan biosynthesis; L-tryptophan from chorismate: step 2/5. Its function is as follows. Catalyzes the transfer of the phosphoribosyl group of 5-phosphorylribose-1-pyrophosphate (PRPP) to anthranilate to yield N-(5'-phosphoribosyl)-anthranilate (PRA). This Aquifex aeolicus (strain VF5) protein is Anthranilate phosphoribosyltransferase.